Reading from the N-terminus, the 270-residue chain is NAD kinase (270 aa).

Catalysis depends on aspartate 45, which acts as the Proton acceptor. Residues aspartate 45–glycine 46, asparagine 121–glutamate 122, arginine 147, aspartate 149, threonine 160–serine 165, and alanine 184 each bind NAD(+).

Belongs to the NAD kinase family. It depends on a divalent metal cation as a cofactor.

It localises to the cytoplasm. The catalysed reaction is NAD(+) + ATP = ADP + NADP(+) + H(+). Involved in the regulation of the intracellular balance of NAD and NADP, and is a key enzyme in the biosynthesis of NADP. Catalyzes specifically the phosphorylation on 2'-hydroxyl of the adenosine moiety of NAD to yield NADP. This Lactobacillus helveticus (strain DPC 4571) protein is NAD kinase.